The primary structure comprises 408 residues: RNA-splicing ligase RtcB1 (408 aa).

Residues Asp75, Cys78, His168, His185, and His281 each coordinate Mn(2+). 167–171 is a GMP binding site; the sequence is NHFIE. Residues 281-282, 313-316, Ser320, 337-340, and Lys407 contribute to the GMP site; these read HN, PGSM, and HGAG. His337 functions as the GMP-histidine intermediate in the catalytic mechanism.

It belongs to the RtcB family. Monomer. Requires Mn(2+) as cofactor.

The catalysed reaction is a 3'-end 3'-phospho-ribonucleotide-RNA + a 5'-end dephospho-ribonucleoside-RNA + GTP = a ribonucleotidyl-ribonucleotide-RNA + GMP + diphosphate. It carries out the reaction a 3'-end 2',3'-cyclophospho-ribonucleotide-RNA + a 5'-end dephospho-ribonucleoside-RNA + GTP + H2O = a ribonucleotidyl-ribonucleotide-RNA + GMP + diphosphate + H(+). GTP-dependent RNA ligase that is involved in RNA repair. Joins RNA with 2',3'-cyclic-phosphate or 3'-phosphate ends to RNA with 5'-hydroxy ends. GTP-dependent RNA ligase that is involved in tRNA repair. Repairs broken tRNA(Asp) and tRNA(Arg) that have been cleaved by colicin E5 or colicin D, respectively. Does not repair damaged 16S rRNA in 30S ribosomal subunits. This is RNA-splicing ligase RtcB1 from Escherichia coli (strain ATCC 25922 / DSM 1103 / LMG 8223 / NCIMB 12210 / NCTC 12241 / WDCM 00013 / Seattle 1946).